The chain runs to 83 residues: Prolactin-releasing peptide (83 aa).

A signal peptide spans 1–21; it reads MALKTWLLCLLLLSLVLPGAS. Phenylalanine amide is present on Phe-52. Residues 57-83 constitute a propeptide that is removed on maturation; it reads ATPRDVTGLGQLSCLPLDGRTKFSQRG.

Widely expressed, with highest levels in medulla oblongata and hypothalamus.

The protein resides in the secreted. Its function is as follows. Stimulates prolactin (PRL) release and regulates the expression of prolactin through its receptor GPR10. May stimulate lactotrophs directly to secrete PRL. The protein is Prolactin-releasing peptide (Prlh) of Rattus norvegicus (Rat).